Reading from the N-terminus, the 208-residue chain is Ribosomal RNA large subunit methyltransferase E (208 aa).

Positions 63, 65, 83, 99, and 124 each coordinate S-adenosyl-L-methionine. Lys164 functions as the Proton acceptor in the catalytic mechanism.

It belongs to the class I-like SAM-binding methyltransferase superfamily. RNA methyltransferase RlmE family.

The protein localises to the cytoplasm. It carries out the reaction uridine(2552) in 23S rRNA + S-adenosyl-L-methionine = 2'-O-methyluridine(2552) in 23S rRNA + S-adenosyl-L-homocysteine + H(+). Specifically methylates the uridine in position 2552 of 23S rRNA at the 2'-O position of the ribose in the fully assembled 50S ribosomal subunit. The chain is Ribosomal RNA large subunit methyltransferase E from Salmonella paratyphi A (strain ATCC 9150 / SARB42).